Reading from the N-terminus, the 203-residue chain is dCTP deaminase (203 aa).

DCTP contacts are provided by residues 105–110, Asp-123, 131–133, Gln-152, Tyr-166, Lys-173, and Gln-177; these read RSSLGR and TLE. Residue Glu-133 is the Proton donor/acceptor of the active site. The tract at residues 164–203 is disordered; that stretch reads RPYGVERGSKYQDQDGPQASRIGSDPEFHSDENQAAEHES. Positions 166–176 are enriched in basic and acidic residues; the sequence is YGVERGSKYQD. A compositionally biased stretch (basic and acidic residues) spans 187-203; that stretch reads SDPEFHSDENQAAEHES.

Belongs to the dCTP deaminase family. In terms of assembly, homotrimer.

The catalysed reaction is dCTP + H2O + H(+) = dUTP + NH4(+). It participates in pyrimidine metabolism; dUMP biosynthesis; dUMP from dCTP (dUTP route): step 1/2. Its function is as follows. Catalyzes the deamination of dCTP to dUTP. The protein is dCTP deaminase of Halorubrum lacusprofundi (strain ATCC 49239 / DSM 5036 / JCM 8891 / ACAM 34).